The following is a 515-amino-acid chain: SWI/SNF-related matrix-associated actin-dependent regulator of chromatin subfamily D member 1 (515 aa).

The segment at 1-128 (MAARAGFQSV…RNHNAKKKKM (128 aa)) is disordered. Residues 14–23 (GGAGASGGAG) show a composition bias toward gly residues. The interval 43–167 (APGQGLYRSP…DQTIMRKRLD (125 aa)) is interaction with ESR1, NR1H4, NR3C1, PGR and SMARCA4. Residues Arg68 and Arg88 each carry the asymmetric dimethylarginine modification. A Glycyl lysine isopeptide (Lys-Gly) (interchain with G-Cter in SUMO2) cross-link involves residue Lys101. Residues 103-117 (PAPQQIKQVQQQAVQ) are compositionally biased toward low complexity. An interaction with SMARCC1 and SMARCC2 region spans residues 168–474 (IQEALKRPIK…VMTDVVGNSE (307 aa)). Positions 180–515 (RKLRIFISNT…LEQALGIRNT (336 aa)) are necessary for GR/NR3C1-mediated remodeling and transcription from chromatin; required for GR/NR3C1 interaction with the BRG1/SMARCA4 complex in vivo. Position 203 is a phosphothreonine (Thr203). Residue Lys223 is modified to N6-acetyllysine. The SWIB/MDM2 domain maps to 290–367 (YQPPQFKLDP…PQRLHALLMP (78 aa)). Positions 412-440 (ASQQEIATLDNKIHETIETINQLKTQREF) form a coiled coil.

The protein belongs to the SMARCD family. Component of the multiprotein chromatin-remodeling complexes SWI/SNF: SWI/SNF-A (BAF), SWI/SNF-B (PBAF) and related complexes. The canonical complex contains a catalytic subunit (either SMARCA4/BRG1/BAF190A or SMARCA2/BRM/BAF190B), and at least SMARCE1, ACTL6A/BAF53, SMARCC1/BAF155, SMARCC2/BAF170, and SMARCB1/SNF5/BAF47. Other subunits specific to each of the complexes may also be present permitting several possible combinations developmentally and tissue specific. Component of the BAF complex, which includes at least actin (ACTB), ARID1A/BAF250A, ARID1B/BAF250B, SMARCA2/BRM, SMARCA4/BRG1/BAF190A, ACTL6A/BAF53, ACTL6B/BAF53B, SMARCE1/BAF57, SMARCC1/BAF155, SMARCC2/BAF170, SMARCB1/SNF5/INI1, and one or more SMARCD1/BAF60A, SMARCD2/BAF60B, or SMARCD3/BAF60C. In muscle cells, the BAF complex also contains DPF3. Component of neural progenitors-specific chromatin remodeling complex (npBAF complex) composed of at least, ARID1A/BAF250A or ARID1B/BAF250B, SMARCD1/BAF60A, SMARCD3/BAF60C, SMARCA2/BRM/BAF190B, SMARCA4/BRG1/BAF190A, SMARCB1/BAF47, SMARCC1/BAF155, SMARCE1/BAF57, SMARCC2/BAF170, PHF10/BAF45A, ACTL6A/BAF53A and actin. Component of neuron-specific chromatin remodeling complex (nBAF complex) composed of at least, ARID1A/BAF250A or ARID1B/BAF250B, SMARCD1/BAF60A, SMARCD3/BAF60C, SMARCA2/BRM/BAF190B, SMARCA4/BRG1/BAF190A, SMARCB1/BAF47, SMARCC1/BAF155, SMARCE1/BAF57, SMARCC2/BAF170, DPF1/BAF45B, DPF3/BAF45C, ACTL6B/BAF53B and actin. Component of the SWI/SNF-B (PBAF) chromatin remodeling complex, at least composed of SMARCA4/BRG1, SMARCB1/BAF47/SNF5, ACTL6A/BAF53A or ACTL6B/BAF53B, SMARCE1/BAF57, SMARCD1/BAF60A, SMARCD2/BAF60B, perhaps SMARCD3/BAF60C, SMARCC1/BAF155, SMARCC2/BAF170, PBRM1/BAF180, ARID2/BAF200 and actin (ACTB). Component of SWI/SNF (GBAF) subcomplex, which includes at least BICRA or BICRAL (mutually exclusive), BRD9, SS18, SMARCA2/BRM, SMARCA4/BRG1/BAF190A, ACTL6A/BAF53, SMARCC1/BAF155, and SMARCD1/BAF60A. Specifically interacts with the VDR heterodimer complex. Interacts with ESR1, NR3C1, NR1H4, PGR, SMARCA4, SMARCC1 and SMARCC2. Interacts with DPF2. Interacts with FOS, FOSB, FOSL1 and FOSL2.

Its subcellular location is the nucleus. Its function is as follows. Involved in transcriptional activation and repression of select genes by chromatin remodeling (alteration of DNA-nucleosome topology). Component of SWI/SNF chromatin remodeling complexes that carry out key enzymatic activities, changing chromatin structure by altering DNA-histone contacts within a nucleosome in an ATP-dependent manner. Belongs to the neural progenitors-specific chromatin remodeling complex (npBAF complex) and the neuron-specific chromatin remodeling complex (nBAF complex). During neural development a switch from a stem/progenitor to a postmitotic chromatin remodeling mechanism occurs as neurons exit the cell cycle and become committed to their adult state. The transition from proliferating neural stem/progenitor cells to postmitotic neurons requires a switch in subunit composition of the npBAF and nBAF complexes. As neural progenitors exit mitosis and differentiate into neurons, npBAF complexes which contain ACTL6A/BAF53A and PHF10/BAF45A, are exchanged for homologous alternative ACTL6B/BAF53B and DPF1/BAF45B or DPF3/BAF45C subunits in neuron-specific complexes (nBAF). The npBAF complex is essential for the self-renewal/proliferative capacity of the multipotent neural stem cells. The nBAF complex along with CREST plays a role regulating the activity of genes essential for dendrite growth. Has a strong influence on vitamin D-mediated transcriptional activity from an enhancer vitamin D receptor element (VDRE). May be a link between mammalian SWI-SNF-like chromatin remodeling complexes and the vitamin D receptor (VDR) heterodimer. Mediates critical interactions between nuclear receptors and the BRG1/SMARCA4 chromatin-remodeling complex for transactivation. Interacts with AKIRIN2. This Bos taurus (Bovine) protein is SWI/SNF-related matrix-associated actin-dependent regulator of chromatin subfamily D member 1 (SMARCD1).